The following is a 1580-amino-acid chain: Endoribonuclease Dicer homolog 3 (1580 aa).

Positions 1-12 (MHSSLEPEKMEE) are enriched in basic and acidic residues. Residues 1–22 (MHSSLEPEKMEEGGGSNSLKRK) form a disordered region. Residues 51-223 (VYEVAKNRNI…SPSNYAAQVS (173 aa)) form the Helicase ATP-binding domain. 64 to 71 (LGTGIDKS) contacts ATP. The DECH box signature appears at 170–173 (DECH). Residues 394–562 (KLKELFHLLD…SCPPPVKNGH (169 aa)) enclose the Helicase C-terminal domain. The span at 581 to 597 (EEAASTQTMSDPPSRNE) shows a compositional bias: polar residues. 2 disordered regions span residues 581-601 (EEAA…QLPP) and 613-638 (QSNG…KKRK). The segment covering 622–633 (SSKSKSSSSAAG) has biased composition (low complexity). The PAZ domain maps to 836–960 (NLIHFANASS…LPPELLARID (125 aa)). 2 consecutive RNase III domains span residues 985–1157 (ASQL…VSGG) and 1198–1340 (LIEL…IDTR). Glu1234, Asp1326, and Glu1329 together coordinate Mg(2+).

Belongs to the helicase family. Dicer subfamily. As to quaternary structure, interacts with DRB2 and DRB5. Mg(2+) serves as cofactor. The cofactor is Mn(2+).

It localises to the nucleus. Its subcellular location is the nucleolus. Ribonuclease (RNase) III involved in RNA-mediated post-transcriptional gene silencing (PTGS). Involved in the processing of repeat-associated small interfering RNAs (ra-siRNAs, derived from heterochromatin and DNA repeats such as transposons) by cleaving small dsRNAs into 24 nucleotide ra-siRNAs. Plays a role in antiviral RNA silencing. Involved in the production of viral siRNAs derived from the cabbage leaf curl virus (CaLCuV) and tobacco rattle virus (TRV). Targeted by the viral silencing suppressor (VSR) protein 2b of the cucumber mosaic virus (CMV) that inactivates DCL3 function in RNA silencing. Acts redundantly with DICER-LIKE 1 (DCL1) to promote flowering via repression of FLOWERING LOCUS C (FLC). Does not seem to be involved in microRNAs (miRNAs) processing. This chain is Endoribonuclease Dicer homolog 3 (DCL3), found in Arabidopsis thaliana (Mouse-ear cress).